The primary structure comprises 1649 residues: Formin-like protein 20 (1649 aa).

The 194-residue stretch at Met-1 to Ser-194 folds into the Phosphatase tensin-type domain. Cys-127 functions as the Phosphocysteine intermediate in the catalytic mechanism. In terms of domain architecture, C2 tensin-type spans Asp-200–Ala-339. Disordered regions lie at residues Asp-416–Ser-774 and Ser-787–Ser-1245. The span at Asp-421–Asp-483 shows a compositional bias: basic and acidic residues. 2 stretches are compositionally biased toward polar residues: residues Leu-500 to Lys-513 and Arg-585 to Leu-597. Positions Lys-598–Thr-616 are enriched in basic and acidic residues. Over residues Ser-648–Pro-662 the composition is skewed to pro residues. Residues Thr-665–Val-678 show a composition bias toward polar residues. Pro residues-rich tracts occupy residues Ser-680–Pro-691, Leu-701–Phe-711, Leu-722–Phe-732, Leu-743–Pro-752, and Ser-795–Ala-804. Polar residues predominate over residues Gly-809 to Leu-820. Pro residues-rich tracts occupy residues Pro-821–Phe-832, Leu-843–Phe-854, and Leu-865–Trp-874. Residues Tyr-878–Thr-890 are compositionally biased toward polar residues. 3 stretches are compositionally biased toward pro residues: residues Ser-893–Ser-904, Pro-944–Phe-960, and Ser-968–Met-1213. The FH2 domain occupies Phe-1237–Lys-1635.

The protein belongs to the formin-like family. Class-II subfamily.

The chain is Formin-like protein 20 (FH20) from Arabidopsis thaliana (Mouse-ear cress).